The following is a 276-amino-acid chain: MALKKVLTIAGSDTSAGAGMQADLKTFQELDVYGMVALTSIVTMDKETWSHDVTPIDMNVFEKQLETAISIGPDAIKTGMLGTQDIIKRAGDVFVESGADYFVVDPVMVCKGEDEVLNPGNTEAMIQYLLPKATVVTPNLFEAGQLSGLGKLTSIEDMKKAAQVIYDKGTPHVIIKGGKALDQDKSYDLYYDGQQFYQLTTDMFQQSYNHGAGCTFAAATTAYLANGKSPKEAIIAAKAFVASAIKNGWKMNDFVGPVDHGAYNRIEQINVEVTEV.

Asn139 contributes to the ATP binding site. Glu142 lines the Mg(2+) pocket. ATP contacts are provided by residues 176–180 (KGGKA), Asp188, Gly213, and Lys238.

The protein belongs to the ThiD family.

It catalyses the reaction pyridoxal + ATP = pyridoxal 5'-phosphate + ADP + H(+). Functionally, phosphorylates B6 vitamers; functions in a salvage pathway. Uses pyridoxal, pyridoxine, and pyridoxamine as substrates. This Staphylococcus epidermidis (strain ATCC 12228 / FDA PCI 1200) protein is Putative pyridoxine kinase (pdxK).